The sequence spans 390 residues: Putative glutamate--cysteine ligase 2 (390 aa).

Belongs to the glutamate--cysteine ligase type 2 family. YbdK subfamily.

It carries out the reaction L-cysteine + L-glutamate + ATP = gamma-L-glutamyl-L-cysteine + ADP + phosphate + H(+). Functionally, ATP-dependent carboxylate-amine ligase which exhibits weak glutamate--cysteine ligase activity. The sequence is that of Putative glutamate--cysteine ligase 2 from Chloroflexus aggregans (strain MD-66 / DSM 9485).